The following is a 372-amino-acid chain: Ciliary neurotrophic factor receptor subunit alpha (372 aa).

A signal peptide spans 1 to 22 (MAASVPWACCAVLAAAAAAVYT). In terms of domain architecture, Ig-like C2-type spans 27-104 (PQEAPHVQYE…WHLRHQVLLH (78 aa)). Cysteines 46 and 89 form a disulfide. N-linked (GlcNAc...) asparagine glycans are attached at residues Asn60, Asn70, Asn142, and Asn190. 2 Fibronectin type-III domains span residues 108–205 (PPRE…VKPD) and 206–306 (PPEN…TEEP). A WSXWS motif motif is present at residues 290–294 (WSDWS). Residues 301-338 (PWTEEPRHLTTEAQAPETTTSTTSSLAPPPTTKICDPG) form a disordered region. The segment covering 311–326 (TEAQAPETTTSTTSSL) has biased composition (low complexity). Ser342 is lipidated: GPI-anchor amidated serine. Positions 343-372 (GGGPSILFLTSVPVTLVLAAAAATANNLLI) are cleaved as a propeptide — removed in mature form.

Belongs to the type I cytokine receptor family. Type 3 subfamily. As to quaternary structure, forms a heterotrimer with LIFR and IL6ST. Interacts with heterodimeric neurotropic cytokine composed of CLCF1/CLC and CRLF1/CLF-1. Either alone or in complex with the heterodimer CLCF1-CRLF1 interacts with SORL1; this interaction may promote internalization and lysosomal degradation.

The protein localises to the cell membrane. Its function is as follows. Binds to CNTF. The alpha subunit provides the receptor specificity. This Mus musculus (Mouse) protein is Ciliary neurotrophic factor receptor subunit alpha (Cntfr).